The chain runs to 238 residues: Valine-rich protein (238 aa).

The first 16 residues, 1–16, serve as a signal peptide directing secretion; sequence MQAVLLVVALFGAALA.

As to expression, prismatic layer of shell (at protein level). Expressed primarily in the mantle with highest level in the mantle edge and lower level in the mantle pallium.

It localises to the secreted. The polypeptide is Valine-rich protein (Margaritifera margaritifera (Freshwater pearl mussel)).